Reading from the N-terminus, the 958-residue chain is Transcription factor PfmaH (958 aa).

Residues 44 to 70 constitute a DNA-binding region (zn(2)-C6 fungal-type); the sequence is CLNCSQAKTGCNKEVPCQRCQDKGLHC. Positions 272–301 are disordered; the sequence is EFAGSPSGVSPFGDLSTSNSEPSSSSWGSS. Residues 287–301 show a composition bias toward low complexity; the sequence is STSNSEPSSSSWGSS.

The protein localises to the nucleus. In terms of biological role, transcription factor; part of the gene cluster that mediates the biosynthesis of dihydroxynaphthalene (DHN)-melanin, a bluish-green pigment forming a dark layer in the conidial wall that protects the conidia from UV radiations. The 2 transcription factors present in the cluster, PfmaF and PfmaH, coordinately regulate DHN-melanin production. PfmaH acts as a pathway specific regulator to mediate the expression of Pfma cluster genes including PfmaJ, leading to DHN-melanin production in conidia, and regulates the conidial formation. The sequence is that of Transcription factor PfmaH (PfmaH) from Pestalotiopsis fici (strain W106-1 / CGMCC3.15140).